Reading from the N-terminus, the 1090-residue chain is Exoglucanase B (1090 aa).

Positions 1-33 (MSSTTRRRSAWVAAATVGVSSFLAVAGITPAIA) are cleaved as a signal peptide. Positions 34 to 53 (AAGAGQPATVTVPAASPVRA) are excised as a propeptide. The segment at 54–699 (AVDGEYAQRF…RLFDDGTTTP (646 aa)) is catalytic. The Nucleophile role is filled by D513. 3 consecutive Fibronectin type-III domains span residues 706–791 (VPTG…TKAT), 797–887 (APSV…TKSD), and 897–984 (VPAG…TKTP). The CBM2 domain occupies 983 to 1090 (TPQTGGSCSV…SFTLNGASCT (108 aa)). Residues C990 and C1089 are joined by a disulfide bond. Residues 1069–1090 (NGSHTGQNPNPASFTLNGASCT) are disordered. The segment covering 1070–1090 (GSHTGQNPNPASFTLNGASCT) has biased composition (polar residues).

It belongs to the glycosyl hydrolase 48 (cellulase L) family.

It carries out the reaction Hydrolysis of (1-&gt;4)-beta-D-glucosidic linkages in cellulose and cellotetraose, releasing cellobiose from the non-reducing ends of the chains.. Functionally, hydrolyzes cellohexaose to a mixture of cellotetraose, cellotriose and cellobiose, with only a trace of glucose. It hydrolyzed cellopentaose to cellotriose and cellobiose, and cellotetraose to cellobiose, but it did not hydrolyze cellotriose. Also has weak endoglucanase activity. Hydrolyzes glucosidic bonds with inversion of anomeric configuration. In Cellulomonas fimi (strain ATCC 484 / DSM 20113 / JCM 1341 / CCUG 24087 / LMG 16345 / NBRC 15513 / NCIMB 8980 / NCTC 7547 / NRS-133), this protein is Exoglucanase B (cbhB).